A 372-amino-acid polypeptide reads, in one-letter code: tRNA-specific 2-thiouridylase MnmA (372 aa).

Residues glycine 9–serine 16 and methionine 35 each bind ATP. Residues asparagine 95–aspartate 97 form an interaction with target base in tRNA region. The active-site Nucleophile is cysteine 100. An intrachain disulfide couples cysteine 100 to cysteine 198. Glycine 124 lines the ATP pocket. The tract at residues lysine 148 to glutamine 150 is interaction with tRNA. The active-site Cysteine persulfide intermediate is cysteine 198. Residues arginine 317 to tyrosine 318 form an interaction with tRNA region.

It belongs to the MnmA/TRMU family.

The protein resides in the cytoplasm. The enzyme catalyses S-sulfanyl-L-cysteinyl-[protein] + uridine(34) in tRNA + AH2 + ATP = 2-thiouridine(34) in tRNA + L-cysteinyl-[protein] + A + AMP + diphosphate + H(+). Functionally, catalyzes the 2-thiolation of uridine at the wobble position (U34) of tRNA, leading to the formation of s(2)U34. The protein is tRNA-specific 2-thiouridylase MnmA of Delftia acidovorans (strain DSM 14801 / SPH-1).